The chain runs to 524 residues: RNA-splicing ligase RtcB homolog 1 (524 aa).

Residues aspartate 141, cysteine 144, histidine 249, histidine 281, and histidine 372 each coordinate Mn(2+). Residue 248-252 participates in GMP binding; it reads NHYLE. Residues 372–373, 421–424, serine 428, 447–450, and lysine 523 contribute to the GMP site; these read HN, GGSM, and HGAG. Histidine 447 functions as the GMP-histidine intermediate in the catalytic mechanism.

The protein belongs to the RtcB family. Catalytic component of the tRNA-splicing ligase complex. It depends on Mn(2+) as a cofactor.

The catalysed reaction is a 3'-end 3'-phospho-ribonucleotide-RNA + a 5'-end dephospho-ribonucleoside-RNA + GTP = a ribonucleotidyl-ribonucleotide-RNA + GMP + diphosphate. It carries out the reaction a 3'-end 2',3'-cyclophospho-ribonucleotide-RNA + a 5'-end dephospho-ribonucleoside-RNA + GTP + H2O = a ribonucleotidyl-ribonucleotide-RNA + GMP + diphosphate + H(+). Its function is as follows. Catalytic subunit of the tRNA-splicing ligase complex that acts by directly joining spliced tRNA halves to mature-sized tRNAs by incorporating the precursor-derived splice junction phosphate into the mature tRNA as a canonical 3',5'-phosphodiester. May act as an RNA ligase with broad substrate specificity, and may function toward other RNAs. The polypeptide is RNA-splicing ligase RtcB homolog 1 (Entamoeba histolytica (strain ATCC 30459 / HM-1:IMSS / ABRM)).